The following is a 305-amino-acid chain: Homoserine O-acetyltransferase (305 aa).

Cys132 acts as the Acyl-thioester intermediate in catalysis. Lys153 and Ser181 together coordinate substrate. The Proton acceptor role is filled by His221. Residue Glu223 is part of the active site. Residue Arg235 coordinates substrate.

Belongs to the MetA family.

Its subcellular location is the cytoplasm. The catalysed reaction is L-homoserine + acetyl-CoA = O-acetyl-L-homoserine + CoA. Its pathway is amino-acid biosynthesis; L-methionine biosynthesis via de novo pathway; O-acetyl-L-homoserine from L-homoserine: step 1/1. Functionally, transfers an acetyl group from acetyl-CoA to L-homoserine, forming acetyl-L-homoserine. The chain is Homoserine O-acetyltransferase from Leuconostoc mesenteroides subsp. mesenteroides (strain ATCC 8293 / DSM 20343 / BCRC 11652 / CCM 1803 / JCM 6124 / NCDO 523 / NBRC 100496 / NCIMB 8023 / NCTC 12954 / NRRL B-1118 / 37Y).